The sequence spans 382 residues: D-galactonate dehydratase (382 aa).

D183 serves as a coordination point for Mg(2+). The Proton donor role is filled by H185. Mg(2+) is bound by residues E209 and E235. H285 (proton acceptor) is an active-site residue.

It belongs to the mandelate racemase/muconate lactonizing enzyme family. GalD subfamily. Requires Mg(2+) as cofactor.

The enzyme catalyses D-galactonate = 2-dehydro-3-deoxy-D-galactonate + H2O. It participates in carbohydrate acid metabolism; D-galactonate degradation; D-glyceraldehyde 3-phosphate and pyruvate from D-galactonate: step 1/3. Catalyzes the dehydration of D-galactonate to 2-keto-3-deoxy-D-galactonate. The protein is D-galactonate dehydratase of Escherichia coli (strain UTI89 / UPEC).